We begin with the raw amino-acid sequence, 425 residues long: UDP-N-acetylglucosamine 1-carboxyvinyltransferase (425 aa).

K22–N23 is a phosphoenolpyruvate binding site. R93 provides a ligand contact to UDP-N-acetyl-alpha-D-glucosamine. Catalysis depends on D117, which acts as the Proton donor. Positions 312 and 334 each coordinate UDP-N-acetyl-alpha-D-glucosamine.

This sequence belongs to the EPSP synthase family. MurA subfamily.

The protein resides in the cytoplasm. The enzyme catalyses phosphoenolpyruvate + UDP-N-acetyl-alpha-D-glucosamine = UDP-N-acetyl-3-O-(1-carboxyvinyl)-alpha-D-glucosamine + phosphate. The protein operates within cell wall biogenesis; peptidoglycan biosynthesis. Functionally, cell wall formation. Adds enolpyruvyl to UDP-N-acetylglucosamine. This is UDP-N-acetylglucosamine 1-carboxyvinyltransferase from Treponema pallidum (strain Nichols).